We begin with the raw amino-acid sequence, 262 residues long: tRNA pseudouridine synthase A (262 aa).

Catalysis depends on D52, which acts as the Nucleophile. Y110 provides a ligand contact to substrate.

The protein belongs to the tRNA pseudouridine synthase TruA family. As to quaternary structure, homodimer.

It carries out the reaction uridine(38/39/40) in tRNA = pseudouridine(38/39/40) in tRNA. Formation of pseudouridine at positions 38, 39 and 40 in the anticodon stem and loop of transfer RNAs. The polypeptide is tRNA pseudouridine synthase A (Chromobacterium violaceum (strain ATCC 12472 / DSM 30191 / JCM 1249 / CCUG 213 / NBRC 12614 / NCIMB 9131 / NCTC 9757 / MK)).